Reading from the N-terminus, the 1149-residue chain is cGMP-specific 3',5'-cyclic phosphodiesterase (1149 aa).

Low complexity-rich tracts occupy residues 1-19 (MHGTVSRSSSSSNMTDVSS) and 31-47 (ATSSSTAATTSASASSS). Positions 1-175 (MHGTVSRSSS…STTASQQDVD (175 aa)) are disordered. Over residues 48–59 (KPLTNGANKTAI) the composition is skewed to polar residues. Over residues 60 to 85 (STAAGVTPGAAPGPGCAAIPASGSSG) the composition is skewed to low complexity. Residues 96-108 (QSNNNRPAGSNRS) are compositionally biased toward polar residues. Over residues 132–158 (SSSSPSQSPSQSQSQSQASIQTQTSQQ) the composition is skewed to low complexity. GAF domains follow at residues 278–430 (DIDV…GIGI) and 462–643 (NLEC…GLGI). Residues 673-996 (SQDQTEKLTQ…RNWQDLAEKV (324 aa)) enclose the PDEase domain. Catalysis depends on H749, which acts as the Proton donor. A divalent metal cation-binding residues include H753, H789, D790, and D900. Disordered regions lie at residues 1037–1066 (QQSQHGSEDSHTPEHQRSGSRLSMKKTGAL) and 1096–1149 (SHVS…CALL). Composition is skewed to basic and acidic residues over residues 1042 to 1053 (GSEDSHTPEHQR) and 1096 to 1106 (SHVSEDMDDKS). Positions 1115–1135 (ASGSMGRMSASSSTSSAGGQM) are enriched in low complexity. A compositionally biased stretch (basic residues) spans 1139-1149 (SKKRSKLCALL). C1146 carries the post-translational modification Cysteine methyl ester. C1146 is lipidated: S-farnesyl cysteine. Positions 1147–1149 (ALL) are cleaved as a propeptide — removed in mature form.

It belongs to the cyclic nucleotide phosphodiesterase family. In terms of assembly, interacts with PrBP. It depends on a divalent metal cation as a cofactor.

The protein localises to the cell membrane. It carries out the reaction 3',5'-cyclic GMP + H2O = GMP + H(+). Functionally, has a role regulating cGMP transport in Malpighian tubule principal cells. The sequence is that of cGMP-specific 3',5'-cyclic phosphodiesterase from Drosophila yakuba (Fruit fly).